Consider the following 274-residue polypeptide: Transcription factor MYB58 (274 aa).

HTH myb-type domains lie at 11–63 (KTKV…INYL) and 64–118 (RPDV…KKRL). DNA-binding regions (H-T-H motif) lie at residues 39-63 (WRSL…INYL) and 91-114 (WSKI…HTHL). 2 disordered regions span residues 121-160 (ETNL…ISSK) and 237-274 (SELG…LLIH). The segment covering 263 to 274 (SSLLESYELLIH) has biased composition (low complexity).

In terms of tissue distribution, expressed in leaves. Specifically expressed in fibers and vessels undergoing secondary wall thickening, especially in inflorescence stems.

Its subcellular location is the nucleus. Functionally, transcriptional activator that binds DNA to the AC cis-elements 5'-ACCTACC-3', 5'-ACCAACC-3' and 5'-ACCTAAC-3' of promoters and specifically activates lignin biosynthetic genes during secondary wall formation mediated by SND1. This chain is Transcription factor MYB58, found in Arabidopsis thaliana (Mouse-ear cress).